A 781-amino-acid chain; its full sequence is N-acetylneuraminate (7)9-O-acetyltransferase (781 aa).

The Cytoplasmic portion of the chain corresponds to 1-15 (MAVLAYNLGKREINQ). A helical membrane pass occupies residues 16–36 (YFSIKNAKLLAAAAVVLLTVF). At 37–308 (HAASRHYGSS…SAPPLSVLQK (272 aa)) the chain is on the lumenal side. S94 (acyl-ester intermediate) is an active-site residue. N-linked (GlcNAc...) asparagine glycosylation is found at N139, N185, and N239. Residues D264 and H267 contribute to the active site. The chain crosses the membrane as a helical span at residues 309–329 (LAAAVLLVSVVCFVLLGFSSH). Positions 330-350 (RKSRPAPDVESGEEKKHPAAV) are disordered. The Cytoplasmic segment spans residues 330-354 (RKSRPAPDVESGEEKKHPAAVGQLN). Residues 355–375 (PKGPLLAIGKMSLIMLYFYLC) traverse the membrane as a helical segment. Residues 376–386 (DRADIFMKEQK) are Lumenal-facing. A helical membrane pass occupies residues 387–407 (FYTHSAFFIPLIYIFVLGVFY). Residues 408-430 (SENSKETKLLNREQTDEWKGWMQ) are Cytoplasmic-facing. A helical membrane pass occupies residues 431 to 451 (LVILIYHISGASAFIPVYMHV). Position 452 (R452) is a topological domain, lumenal. A helical transmembrane segment spans residues 453-473 (VLVAAYLFQTGYGHFSFFWLK). Over 474-477 (GDFG) the chain is Cytoplasmic. The chain crosses the membrane as a helical span at residues 478-498 (LYRVCQVLFRLNFLVVVLCLV). The Lumenal segment spans residues 499–504 (MDRPYQ). Residues 505–525 (FYYFVPLVTFWFAVIYATMAL) form a helical membrane-spanning segment. The Cytoplasmic segment spans residues 526–537 (WPQILQKQANGS). The helical transmembrane segment at 538 to 558 (AFWNLALLLKLLGLLLFIGFF) threads the bilayer. Residues 559–595 (AYSQELFEGIFSVWPLSKLFELQGSIHEWWFRWKLDR) lie on the Lumenal side of the membrane. A helical membrane pass occupies residues 596-616 (FAVVNGMLFAFIYLLLQKYQL). Over 617–629 (LSEGKGEPLFSNK) the chain is Cytoplasmic. The helical transmembrane segment at 630 to 650 (ISNCLLFVSVVSFMTYSIWAS) threads the bilayer. At 651–660 (GCKNKSECNE) the chain is on the lumenal side. Residue N654 is glycosylated (N-linked (GlcNAc...) asparagine). A helical transmembrane segment spans residues 661–681 (MHPYISVILAFILIRNIPGYA). Residues 682–687 (RSLYSS) lie on the Cytoplasmic side of the membrane. The helical transmembrane segment at 688–708 (FFAWFGKISLELFICQYHIWL) threads the bilayer. The Lumenal portion of the chain corresponds to 709-714 (AADTKG). The helical transmembrane segment at 715 to 735 (ILVLIPGNPTLNIIVSTFIFV) threads the bilayer. Residues 736–756 (CVAHEISQITNDLAQVAIPKE) are Cytoplasmic-facing. The chain crosses the membrane as a helical span at residues 757 to 777 (SGPLLKRLLGAGVFLVLVLTL). Topologically, residues 778 to 781 (SQKD) are lumenal.

It belongs to the PC-esterase family. CASD1 subfamily.

The protein localises to the golgi apparatus membrane. It catalyses the reaction CMP-N-acetyl-beta-neuraminate + acetyl-CoA = CMP-N-acetyl-9-O-acetyl-beta-neuraminate + CoA. The catalysed reaction is a ganglioside GD3 (d18:1(4E)) + acetyl-CoA = a ganglioside Ac-O-7-GD3(d18:1(4E)) + CoA. It carries out the reaction CMP-N-acetyl-beta-neuraminate + acetyl-CoA = CMP-N-acetyl-7-O-acetyl-beta-neuraminate + CoA. In terms of biological role, key enzyme in the biosynthesis of O-acetylated (O-Ac) sialoglycans such as gangliosides O-AcGD3 and O-AcGD2, which affect various processes such as cell-cell interactions, host-pathogen recognition. Catalyzes the transfer of an acetyl group from a donor, the acetyl-coenzyme-A molecule (acetyl-CoA), to the C7/8/9 OH-position of a sialic acid residue. The primary site of O-acetyl group transfer on sialic acid seems to depend on cell type and can be C7, from which the O-acetyl group could subsequently migrate to the C8 and then to the C9 position, or at C9 with possibility of migrating to the C8 and then to the C7 position. Together with ST8SIA1 (GD3 synthase) it increases the levels of ganglioside Ac-O-7-GD3. Can transfer the acetyl group from acetyl-CoA to free sialate (N-acetylneuraminate, Neu5Ac) in vitro, but has preferred substrate specificity for CMP-activated sialate (CMP-Neu5Ac), resulting in the formation of 9-O-acetylated CMP-Neu5Ac (CMP-Neu5,9Ac2). CMP-Neu5,9Ac2 may be used by sialyltransferases as a sialate donor for glycoconjugate acceptors such as ganglioside GD3. O-acetylation at position C9 of ganglioside GD3 can counteract the pro-apoptotic effects of the ganglioside GD3 in tumor cells. This is N-acetylneuraminate (7)9-O-acetyltransferase from Danio rerio (Zebrafish).